A 127-amino-acid polypeptide reads, in one-letter code: Small ribosomal subunit protein bS6 (127 aa).

The protein belongs to the bacterial ribosomal protein bS6 family.

In terms of biological role, binds together with bS18 to 16S ribosomal RNA. In Buchnera aphidicola subsp. Cinara cedri (strain Cc), this protein is Small ribosomal subunit protein bS6.